We begin with the raw amino-acid sequence, 73 residues long: UPF0435 protein lmo1707 (73 aa).

The protein belongs to the UPF0435 family.

In Listeria monocytogenes serovar 1/2a (strain ATCC BAA-679 / EGD-e), this protein is UPF0435 protein lmo1707.